Here is a 552-residue protein sequence, read N- to C-terminus: Probable protein kinase UbiB (552 aa).

Residues 121–504 (HFDTVPLASA…QGLQRRVVNA (384 aa)) enclose the Protein kinase domain. Residues 127–135 (LASASISQV) and Lys149 each bind ATP. The active-site Proton acceptor is the Asp284. The next 2 helical transmembrane spans lie at 501–521 (VVNAIVGSGLLVAAAVLYGLH) and 530–550 (IPVWSLISGCIGALALFSAWW).

Belongs to the ABC1 family. UbiB subfamily.

The protein localises to the cell inner membrane. The protein operates within cofactor biosynthesis; ubiquinone biosynthesis [regulation]. Functionally, is probably a protein kinase regulator of UbiI activity which is involved in aerobic coenzyme Q (ubiquinone) biosynthesis. This Xylella fastidiosa (strain M23) protein is Probable protein kinase UbiB.